A 319-amino-acid chain; its full sequence is Annexin A4 (319 aa).

Alanine 2 is modified (N-acetylalanine). Threonine 7 carries the phosphothreonine modification. Phosphoserine is present on serine 12. Annexin repeat units lie at residues 14–85 (FNAA…GMMT), 86–157 (PTVL…SLSA), 169–241 (ALMR…AIVK), and 245–316 (NKSA…ILCG). An N6-acetyllysine mark is found at lysine 213, lysine 293, and lysine 300.

This sequence belongs to the annexin family. Monomer. Binds to SFTPA1 in a Ca(2+)-dependent manner.

The protein localises to the zymogen granule membrane. Functionally, may play a role in alveolar type II cells through interaction with the surfactant protein SFTPA1 (SP-A). The chain is Annexin A4 (ANXA4) from Bos taurus (Bovine).